Reading from the N-terminus, the 1031-residue chain is MICPIFFLYIINVLFTQYFIKCEGNKVTVISHNNGHNDNLDVNKNGVISQENVFDTSESLNLPSNKKVGSDDLNTTTISFTVPDNLENEVKVVSSSESGKGATVSHTKVTSEGLSDTQPNVTQSVSSSTHTPGSLDSTMSTEQHSSVSQSSLPTESSSETLNKATVPEIPIQINSGLLKNYNGVKVTGSCGSYFRVYLVPHILIYALTKYSVIQLESLFNDNARIDVEHKGELQNKCSEGYHFKLVVYITHNVLNLKWKTYKPNEESKSEDSDVRKYRIPKLERPFTSIQVYTANSKAGVIETKNYNIRTDIPDTCDAIATDCFLNGNVNIEKCFQCTLLVQKKDKSHECFKYVSSEMKKKMNEIKVKAQDDFNPNEYKLIESIDNILSKIYKKANKPFEISKDLINLEDLDYQFKNELLEYCKLLKKVDTSGTLEEYELGNAEDIYNNLTRLLKSHSDENIVTLQGKLRNTAICIKNVDEWILNKRGLTLPSESPSESSSKSDSYLNTFNDKDKNEDKDDMSKNSKEEFKNDDKENSDDQNNNDSNKKDDENNINNGDTNYVYDFDDDDYDNNSYEKDMYESPIKENKNGVIDLEKYGNQIKLKSPYFKNSKYCNYEYCNRWRDKTSCISQIEVEEQGNCGLCWIFASKLHFETIRCMRGYGHFRSSALYVANCSKRKPIDRCEEGSNPLEFLRILDEKKFLPLESNYPYSYTSAGNSCPKLPNSWTNLWGDTKLLFNKKVHRYIGNKGFISHETSYFKNNMDLFIDMVKREVQNKGSVIIYIKTQDVIGYDFNGKGVHSMCGDRTPDHAANIIGYGNYINKKGEKRSYWLIRNSWSYYWGDEGNFRVDMLGPKNCLYNFIHTVVFFKLDLGTIHVPKKKSWKKNVYFLRHNPDFMYSLYYNNYEPETSQDFESENDYDNAFVHGQSNESDETNKEGKNVHNSVEKKIQILHILKHIKDSQIKRGLVKYDNINETKDEHTCSRVNSQDAEKYEECKKFCLTKWNECKDHYSPGYCLTDLYKGEDCNFCYV.

An N-terminal signal peptide occupies residues 1-24 (MICPIFFLYIINVLFTQYFIKCEG). N74 is a glycosylation site (N-linked (GlcNAc...) asparagine). Residues 91 to 101 (KVVSSSESGKG) show a composition bias toward low complexity. A disordered region spans residues 91 to 163 (KVVSSSESGK…TESSSETLNK (73 aa)). The segment covering 104–139 (VSHTKVTSEGLSDTQPNVTQSVSSSTHTPGSLDSTM) has biased composition (polar residues). An N-linked (GlcNAc...) asparagine glycan is attached at N120. Positions 140 to 158 (STEQHSSVSQSSLPTESSS) are enriched in low complexity. Residue N449 is glycosylated (N-linked (GlcNAc...) asparagine). Residues 490 to 567 (TLPSESPSES…GDTNYVYDFD (78 aa)) are disordered. Residues 492 to 505 (PSESPSESSSKSDS) are compositionally biased toward low complexity. Positions 511-535 (NDKDKNEDKDDMSKNSKEEFKNDDK) are enriched in basic and acidic residues. N544 carries an N-linked (GlcNAc...) asparagine glycan. A compositionally biased stretch (low complexity) spans 554–564 (NINNGDTNYVY). N573 carries N-linked (GlcNAc...) asparagine glycosylation. C644 is a catalytic residue. The N-linked (GlcNAc...) asparagine glycan is linked to N674. Residues H810 and N835 contribute to the active site. 2 N-linked (GlcNAc...) asparagine glycosylation sites follow: N929 and N974.

The protein belongs to the peptidase C1 family. Post-translationally, just prior to merozoite egress from host erythrocytes, proteolytically cleaved by SUB1 to generate the active 75kDa form.

The protein localises to the parasitophorous vacuole lumen. The protein resides in the parasitophorous vacuole membrane. Its function is as follows. Cysteine protease which plays an essential role in merozoite egress from host erythrocytes. May cleave host SPTB/beta spectrin and ANK1/ankyrin-1 which disrupts host erythrocyte actin cytoskeleton and leads to host erythrocyte cell membrane rupture. The chain is Serine-repeat antigen protein 6 from Plasmodium falciparum (isolate 3D7).